We begin with the raw amino-acid sequence, 493 residues long: Glutamyl-tRNA(Gln) amidotransferase subunit A (493 aa).

Residues K81 and S156 each act as charge relay system in the active site. S180 (acyl-ester intermediate) is an active-site residue.

It belongs to the amidase family. GatA subfamily. In terms of assembly, heterotrimer of A, B and C subunits.

The enzyme catalyses L-glutamyl-tRNA(Gln) + L-glutamine + ATP + H2O = L-glutaminyl-tRNA(Gln) + L-glutamate + ADP + phosphate + H(+). Functionally, allows the formation of correctly charged Gln-tRNA(Gln) through the transamidation of misacylated Glu-tRNA(Gln) in organisms which lack glutaminyl-tRNA synthetase. The reaction takes place in the presence of glutamine and ATP through an activated gamma-phospho-Glu-tRNA(Gln). The sequence is that of Glutamyl-tRNA(Gln) amidotransferase subunit A from Mycobacterium ulcerans (strain Agy99).